The chain runs to 188 residues: Large ribosomal subunit protein uL5 (188 aa).

It belongs to the universal ribosomal protein uL5 family. As to quaternary structure, part of the 50S ribosomal subunit; part of the 5S rRNA/L5/L18/L25 subcomplex. Contacts the 5S rRNA and the P site tRNA. Forms a bridge to the 30S subunit in the 70S ribosome.

Its function is as follows. This is one of the proteins that bind and probably mediate the attachment of the 5S RNA into the large ribosomal subunit, where it forms part of the central protuberance. In the 70S ribosome it contacts protein S13 of the 30S subunit (bridge B1b), connecting the 2 subunits; this bridge is implicated in subunit movement. Contacts the P site tRNA; the 5S rRNA and some of its associated proteins might help stabilize positioning of ribosome-bound tRNAs. This chain is Large ribosomal subunit protein uL5, found in Aquifex pyrophilus.